The primary structure comprises 872 residues: N-acetyltransferase eso1 (872 aa).

A polymerase type-Y region spans residues Met1–Arg591. The 257-residue stretch at Val29–Gly285 folds into the UmuC domain. The segment at Ser533–Lys567 adopts a UBZ3-type zinc-finger fold. The Zn(2+) site is built by Cys540, Cys543, His555, and His559. The segment at Arg569–Ser602 is disordered. Basic residues predominate over residues Gln583 to Ser595. The tract at residues Lys592–Ser872 is acetyltransferase. A CCHH-type zinc finger spans residues Val653–His677.

The protein in the C-terminal section; belongs to the acetyltransferase family. ECO subfamily. This sequence in the N-terminal section; belongs to the DNA polymerase type-Y family. Interacts with pds5.

It localises to the nucleus. Functionally, probable acetyltransferase required for the establishment of sister chromatid cohesion and couple the processes of cohesion and DNA replication to ensure that only sister chromatids become paired together. In contrast to the structural cohesins, the deposition and establishment factors are required only during S phase. The relevance of acetyltransferase function remains unclear. The protein is N-acetyltransferase eso1 (eso1) of Schizosaccharomyces pombe (strain 972 / ATCC 24843) (Fission yeast).